Here is a 373-residue protein sequence, read N- to C-terminus: Ribosomal protein uL16 3-hydroxylase (373 aa).

Residues 92–219 (PTAALMRPFR…LISGFADYVL (128 aa)) form the JmjC domain. Residues serine 114, 125–127 (HLD), arginine 140, and histidine 187 each bind substrate. 2 residues coordinate Fe cation: histidine 125 and aspartate 127. Histidine 187 contacts Fe cation.

The protein belongs to the ROX family. RoxA/YcfD subfamily. As to quaternary structure, homodimer. The cofactor is Fe(2+).

The enzyme catalyses L-arginyl-[ribosomal protein uL16] + 2-oxoglutarate + O2 = (3R)-3-hydroxy-L-arginyl-[ribosomal protein uL16] + succinate + CO2. In terms of biological role, growth-regulating oxygenase that catalyzes the hydroxylation of ribosomal protein uL16 on 'Arg-81'. The chain is Ribosomal protein uL16 3-hydroxylase (roxA) from Escherichia coli (strain K12).